The primary structure comprises 239 residues: Phosphoribosylaminoimidazole-succinocarboxamide synthase (239 aa).

This sequence belongs to the SAICAR synthetase family.

It carries out the reaction 5-amino-1-(5-phospho-D-ribosyl)imidazole-4-carboxylate + L-aspartate + ATP = (2S)-2-[5-amino-1-(5-phospho-beta-D-ribosyl)imidazole-4-carboxamido]succinate + ADP + phosphate + 2 H(+). It functions in the pathway purine metabolism; IMP biosynthesis via de novo pathway; 5-amino-1-(5-phospho-D-ribosyl)imidazole-4-carboxamide from 5-amino-1-(5-phospho-D-ribosyl)imidazole-4-carboxylate: step 1/2. This is Phosphoribosylaminoimidazole-succinocarboxamide synthase from Bacillus mycoides (strain KBAB4) (Bacillus weihenstephanensis).